The following is a 545-amino-acid chain: Heparanase (545 aa).

Positions 1 to 37 (MLACRKPGLRPPLLLLLPLLGPLGPCSPGTPAAAAPA) are cleaved as a signal peptide. 64–66 (DAN) serves as a coordination point for heparan sulfate group. Positions 112-159 (PAFEERSYWLSQSNQDICKSGSIPSDVEEKLRLEWPFQEQVLLREQYQ) are cleaved as a propeptide — linker peptide. Cysteines 129 and 181 form a disulfide. 160-164 (KKFTN) lines the heparan sulfate group pocket. Residues asparagine 164 and asparagine 219 are each glycosylated (N-linked (GlcNAc...) asparagine). Glutamate 227 serves as the catalytic Proton donor. Heparan sulfate group is bound by residues 272 to 282 (QPRRNTVKMLK), histidine 298, and arginine 305. Positions 290-419 (EVIDSVTWHH…LLFKKLVGNK (130 aa)) are required for heterodimerization with the heparanase 8 kDa subunit. The active-site Nucleophile is the glutamate 345. Residues 350–352 (FGG) and 391–393 (GNY) each bind heparan sulfate group. Residues cysteine 439 and cysteine 544 are joined by a disulfide bond. Asparagine 461 is a glycosylation site (N-linked (GlcNAc...) asparagine). Residues 529-545 (FSYGFFVIRNAKVAACI) form a required for transferring proheparanase to the Golgi apparatus, secretion and subsequent enzyme activity and for enhancement of PKB/AKT1 phosphorylation region.

It belongs to the glycosyl hydrolase 79 family. As to quaternary structure, heterodimer; heterodimer formation between the 8 kDa and the 50 kDa subunits is required for enzyme activity. Interacts with TF; the interaction, inhibited by heparin, enhances the generation of activated factor X and activates coagulation. Interacts with HRG; the interaction is enhanced at acidic pH, partially inhibits binding of HPSE to cell surface receptors and modulates its enzymatic activity. Interacts with SDC1; the interaction enhances the shedding of SDC1. Interacts with HPSE2. In terms of processing, proteolytically processed. The cleavage of the 65 kDa form leads to the generation of a linker peptide, and the 8 kDa and the 50 kDa products. The active form, the 8/50 kDa heterodimer, is resistant to degradation. Complete removal of the linker peptide appears to be a prerequisite to the complete activation of the enzyme. Post-translationally, N-glycosylated. Glycosylation of the 50 kDa subunit appears to be essential for its solubility. As to expression, highly expressed in placenta and weakly in the kidney, lung, spleen and uterus.

The protein resides in the lysosome membrane. It is found in the secreted. It localises to the nucleus. The catalysed reaction is endohydrolysis of (1-&gt;4)-beta-D-glycosidic bonds of heparan sulfate chains in heparan sulfate proteoglycan.. Inhibited by laminarin sulfate and, to a lower extent, by heparin, sulfamin and EDTA. Activated by calcium and magnesium. Functionally, endoglycosidase that cleaves heparan sulfate proteoglycans (HSPGs) into heparan sulfate side chains and core proteoglycans. Participates in extracellular matrix (ECM) degradation and remodeling. Selectively cleaves the linkage between a glucuronic acid unit and an N-sulfo glucosamine unit carrying either a 3-O-sulfo or a 6-O-sulfo group. Can also cleave the linkage between a glucuronic acid unit and an N-sulfo glucosamine unit carrying a 2-O-sulfo group, but not linkages between a glucuronic acid unit and a 2-O-sulfated iduronic acid moiety. Essentially inactive at neutral pH but becomes active under acidic conditions such as during tumor invasion and in inflammatory processes. Facilitates cell migration associated with metastasis, wound healing and inflammation. Enhances shedding of syndecans. Acts as a procoagulant by enhancing the generation of activated factor X/F10 in the presence of tissue factor/TF and activated factor VII/F7. Independent of its enzymatic activity, increases cell adhesion to the extracellular matrix (ECM). Enhances AKT1/PKB phosphorylation, possibly via interaction with a lipid raft-resident receptor. Plays a role in the regulation of osteogenesis. Enhances angiogenesis through up-regulation of SRC-mediated activation of VEGF. Implicated in hair follicle inner root sheath differentiation and hair homeostasis. The protein is Heparanase (HPSE) of Bos taurus (Bovine).